A 263-amino-acid chain; its full sequence is Methylesterase 3 (263 aa).

Residue S85 is the Acyl-ester intermediate of the active site. Residues D213 and H241 each act as charge relay system in the active site.

This sequence belongs to the AB hydrolase superfamily. Methylesterase family.

It carries out the reaction methyl (indol-3-yl)acetate + H2O = (indol-3-yl)acetate + methanol + H(+). It catalyses the reaction methyl (-)-jasmonate + H2O = jasmonate + methanol + H(+). The protein operates within plant hormone biosynthesis. Its pathway is lipid metabolism; oxylipin biosynthesis. In terms of biological role, methylesterase shown to have carboxylesterase activity, methyl indole-3-acetic acid (MeIAA) esterase activity and methyl jasmonate (MeJA) esterase activity in vitro. This chain is Methylesterase 3, found in Arabidopsis thaliana (Mouse-ear cress).